The chain runs to 388 residues: DNA primase small subunit PriS (388 aa).

Active-site residues include aspartate 100, aspartate 102, and aspartate 288.

The protein belongs to the eukaryotic-type primase small subunit family. Heterodimer of a small subunit (PriS) and a large subunit (PriL). Mg(2+) serves as cofactor. It depends on Mn(2+) as a cofactor.

Its function is as follows. Catalytic subunit of DNA primase, an RNA polymerase that catalyzes the synthesis of short RNA molecules used as primers for DNA polymerase during DNA replication. The small subunit contains the primase catalytic core and has DNA synthesis activity on its own. Binding to the large subunit stabilizes and modulates the activity, increasing the rate of DNA synthesis while decreasing the length of the DNA fragments, and conferring RNA synthesis capability. The DNA polymerase activity may enable DNA primase to also catalyze primer extension after primer synthesis. May also play a role in DNA repair. In Methanospirillum hungatei JF-1 (strain ATCC 27890 / DSM 864 / NBRC 100397 / JF-1), this protein is DNA primase small subunit PriS.